A 171-amino-acid polypeptide reads, in one-letter code: MEEYAREPCPWRIVDDCGGAFTMGTIGGGIFQAFKGFRNSPVGINHRLRGSLTAIKTRAPQLGGSFAVWGGLFSTIDCSMVQIRGKEDPWNSITSGALTGAILAARNGPVAMVGSAAMGGILLALIEGAGILLTRFASAQFPNGPQFTEDHSQLPSSQLPSSPFGDYRQYQ.

A disulfide bridge links cysteine 9 with cysteine 78. A run of 3 helical transmembrane segments spans residues 17-37 (CGGA…FKGF), 63-77 (GGSF…STID), and 113-133 (VGSA…GILL). The tract at residues 144–171 (GPQFTEDHSQLPSSQLPSSPFGDYRQYQ) is disordered. Low complexity predominate over residues 153 to 163 (QLPSSQLPSSP).

This sequence belongs to the Tim17/Tim22/Tim23 family. In terms of assembly, component of the TIM23 complex at least composed of TIMM23, TIMM17 (TIMM17A or TIMM17B) and TIMM50. The complex interacts with the TIMM44 component of the PAM complex and with DNAJC15. In terms of processing, degraded by YMEL1 downstream of the integrated stress response (ISR).

It is found in the mitochondrion inner membrane. Functionally, essential component of the TIM23 complex, a complex that mediates the translocation of transit peptide-containing proteins across the mitochondrial inner membrane. The sequence is that of Mitochondrial import inner membrane translocase subunit Tim17-A (Timm17a) from Mus musculus (Mouse).